Here is a 286-residue protein sequence, read N- to C-terminus: Plasma membrane ascorbate-dependent reductase CYBRD1 (286 aa).

The Cytoplasmic portion of the chain corresponds to 1–7 (MAMEGYW). The chain crosses the membrane as a helical span at residues 8-32 (RFLALLGSALLVGFLSVIFALVWVL). In terms of domain architecture, Cytochrome b561 spans 15 to 220 (SALLVGFLSV…FGALIFWIVT (206 aa)). Topologically, residues 33–47 (HYREGLGWDGSALEF) are extracellular. A helical transmembrane segment spans residues 48 to 69 (NWHPVLMVTGFVFIQGIAIIVY). Heme b is bound by residues histidine 50, arginine 70, and lysine 79. Topologically, residues 70 to 78 (RLPWTWKCS) are cytoplasmic. L-ascorbate contacts are provided by lysine 79 and lysine 83. The helical transmembrane segment at 79–105 (KLLMKSIHAGLNAVAAILAIISVVAVF) threads the bilayer. Position 86 (histidine 86) interacts with heme b. Topologically, residues 106 to 118 (ENHNVNNIANMYS) are extracellular. Histidine 108 serves as a coordination point for Fe(3+). Heme b contacts are provided by residues 115-118 (NMYS) and histidine 120. Residues 119 to 144 (LHSWVGLIAVICYLLQLLSGFSVFLL) form a helical membrane-spanning segment. At 145–151 (PWAPLSL) the chain is on the cytoplasmic side. Arginine 152 is an L-ascorbate binding site. Residues 152–179 (RAFLMPIHVYSGIVIFGTVIATALMGLT) traverse the membrane as a helical segment. Heme b-binding residues include histidine 159 and glutamate 180. At 180–197 (EKLIFSLRDPAYSTFPPE) the chain is on the extracellular side. The helical transmembrane segment at 198-222 (GVFVNTLGLLILVFGALIFWIVTRP) threads the bilayer. Topologically, residues 223 to 286 (QWKRPKEPNS…LDEAGQRSTM (64 aa)) are cytoplasmic. Lysine 225 is a heme b binding site. Positions 229–268 (EPNSTILHPNGGTEQGARGSMPAYSGNNMDKSDSELNSEV) are disordered. Serine 232 is modified (phosphoserine). Residue threonine 285 is modified to Phosphothreonine.

In terms of assembly, homodimer. The cofactor is heme b. In terms of tissue distribution, present in erythrocyte membranes (at protein level). Also expressed in respiratory epithelium.

It is found in the cell membrane. The protein resides in the apical cell membrane. It carries out the reaction Fe(3+)(out) + L-ascorbate(in) = monodehydro-L-ascorbate radical(in) + Fe(2+)(out) + H(+). The enzyme catalyses Cu(2+)(out) + L-ascorbate(in) = Cu(+)(out) + monodehydro-L-ascorbate radical(in) + H(+). The catalysed reaction is monodehydro-L-ascorbate radical(out) + L-ascorbate(in) = monodehydro-L-ascorbate radical(in) + L-ascorbate(out). Activated by chelators like citrate, malate, and oxalate specially at alkaline pH. Functionally, plasma membrane reductase that uses cytoplasmic ascorbate as an electron donor to reduce extracellular Fe(3+) into Fe(2+). Probably functions in dietary iron absorption at the brush border of duodenal enterocytes by producing Fe(2+), the divalent form of iron that can be transported into enterocytes. It is also able to reduce extracellular monodehydro-L-ascorbate and may be involved in extracellular ascorbate regeneration by erythrocytes in blood. May also act as a ferrireductase in airway epithelial cells. May also function as a cupric transmembrane reductase. This is Plasma membrane ascorbate-dependent reductase CYBRD1 from Homo sapiens (Human).